A 500-amino-acid chain; its full sequence is MELLTGHGLWPVAMFTVILILLVDLLHRRQRWASRYPPGPVPLPLLGNLLQVDLKNMQYSVHKLQQHYGDVFSLQMAWKHMVMINGLKAVREVLVNYGEYTADRPKIPIYEHGSLGPKARGVILAPYGPEWREQRRFSVSTLRNLGLGKKSLEQWVTDEAGHLCDAFKDQAGRPFNPSTLLNKAVCNVITSLIFARRFEYEDANLIRMLRLLEEALTNISGFIPEILNTFPVLLHIPGLFDKVFSGQKTFAAIVDNLLTENRRTWDPEQPPRGLTDAFLAEMEKAKGNPESSFNDQNLRMVVNDLFIAGTVSTSTTLSWALLFMIQYPDVQRRVQQEIDDILGPGRSPEMADQARMPYTNAVIHEVQRFADIAPLNLPCITSRDIEVQGFLIPKGTTLITNLSSVLKDETVWEKPLHFHPEHFLDAQGCFVKQEAFMPFSAGRRACLGEPLARMELFLFFTCLLQRFSFSVPAGQPRPSDHVVLGVLKSPAPYQLCAVPR.

Heme is bound at residue Cys-446.

Belongs to the cytochrome P450 family. Heme is required as a cofactor.

It is found in the endoplasmic reticulum membrane. The protein resides in the microsome membrane. This Mesocricetus auratus (Golden hamster) protein is Cytochrome P450 2D28 (CYP2D28A).